The following is a 220-amino-acid chain: UPF0502 protein VVA1225 (220 aa).

This sequence belongs to the UPF0502 family.

The protein is UPF0502 protein VVA1225 of Vibrio vulnificus (strain YJ016).